The following is a 431-amino-acid chain: Forkhead box protein P3 (431 aa).

The segment at 1–68 (MPNPRPGKPS…SSLNPMPPSQ (68 aa)) is disordered. The segment covering 10 to 25 (SAPSLALGPSPGASPS) has biased composition (low complexity). S19 is subject to Phosphoserine; by CDK2. K31 is subject to N6-acetyllysine. The Nuclear export signal motif lies at 68-76 (QLQLPTLPL). The LXXLL motif motif lies at 92 to 96 (LQALL). Residues 106–190 (LSTVDAHART…STLSAVPQSS (85 aa)) form an essential for transcriptional repressor activity and for interaction with KAT5 and HDAC7 region. The interval 106 to 198 (LSTVDAHART…SSYPLLANGV (93 aa)) is interaction with ZFP90. The tract at residues 149–199 (LPPGINVASLEWVSREPALLCTFPNPSAPRKDSTLSAVPQSSYPLLANGVC) is interaction with IKZF4. The C2H2-type zinc finger occupies 197–222 (GVCKWPGCEKVFEEPEDFLKHCQADH). The Nuclear export signal signature appears at 239–248 (VQSLEQQLVL). The interval 239–260 (VQSLEQQLVLEKEKLSAMQAHL) is leucine-zipper. Glycyl lysine isopeptide (Lys-Gly) (interchain with G-Cter in ubiquitin) cross-links involve residues K250 and K252. 2 positions are modified to N6-acetyllysine; alternate: K263 and K268. Glycyl lysine isopeptide (Lys-Gly) (interchain with G-Cter in ubiquitin); alternate cross-links involve residues K263 and K268. The interval 278–336 (GSCCIVAAGSQGPVVPAWSGPREAPDSLFAVRRHLWGSHGNSTFPEFLHNMDYFKFHNM) is interaction with RUNX1. Positions 337–423 (RPPFTYATLI…RKKRSQRPSR (87 aa)) form a DNA-binding region, fork-head. Residue K393 forms a Glycyl lysine isopeptide (Lys-Gly) (interchain with G-Cter in ubiquitin) linkage. Residues 414 to 417 (RKKR) carry the Nuclear localization signal motif. S418 is subject to Phosphoserine. Positions 418–431 (SQRPSRCSNPTPGP) are excised as a propeptide.

As to quaternary structure, homodimer. Dimerization is essential for its transcriptional regulator activity. Interacts with IKZF3. Isoform 1 (via LXXLL motif), but not isoform 2, interacts with isoform 4 of RORA (via AF-2 motif). Interacts with STUB1, HSPA8 and HSPA1A/B. Interacts with PPP1CA, PPP1CB and PPP1CG. Interacts with KAT5 and HDAC7. Interacts with HDAC9 in the absence of T-cell stimulation. Interacts with USP7. Interacts with isoform 2 of ZFP90 and can form a complex with TRIM28 in the presence of isoform 2 of ZFP90. Interacts with RUNX1. Interacts with RORC. Interacts with RELA and NFATC2. Interacts with RUNX2, RUNX3 and IKZF4. Post-translationally, polyubiquitinated, leading to its proteasomal degradation in regulatory T-cells (Treg) which is mediated by STUB1 in a HSPA1A/B-dependent manner. Deubiquitinated by USP7 and USP44; leading to increase in protein stability. In terms of processing, phosphorylation at Ser-418 regulates its transcriptional repressor activity and consequently, regulatory T-cells (Treg) suppressive function. Dephosphorylated at Ser-418 by protein phosphatase 1 (PP1) in Treg cells derived from patients with rheumatoid arthritis. Phosphorylation by CDK2 negatively regulates its transcriptional activity and protein stability. Acetylation on lysine residues stabilizes FOXP3 and promotes differentiation of T-cells into induced regulatory T-cells (iTregs) associated with suppressive functions. Acetylation is mediated by a coordinated action of KAT5 and EP300/p300 acetyltransferases: EP300/p300 is required to enhance KAT5 autoacetylation, promoting acetylation of FOXP3 by KAT5. Deacetylated by SIRT1. Post-translationally, undergoes proteolytic cleavage in activated regulatory T-cells (Treg), and can be cleaved at either the N- or C-terminal site, or at both sites.

It localises to the nucleus. Its subcellular location is the cytoplasm. In terms of biological role, transcriptional regulator which is crucial for the development and inhibitory function of regulatory T-cells (Treg). Plays an essential role in maintaining homeostasis of the immune system by allowing the acquisition of full suppressive function and stability of the Treg lineage, and by directly modulating the expansion and function of conventional T-cells. Can act either as a transcriptional repressor or a transcriptional activator depending on its interactions with other transcription factors, histone acetylases and deacetylases. The suppressive activity of Treg involves the coordinate activation of many genes, including CTLA4 and TNFRSF18 by FOXP3 along with repression of genes encoding cytokines such as interleukin-2 (IL2) and interferon-gamma (IFNG). Inhibits cytokine production and T-cell effector function by repressing the activity of two key transcription factors, RELA and NFATC2. Mediates transcriptional repression of IL2 via its association with histone acetylase KAT5 and histone deacetylase HDAC7. Can activate the expression of TNFRSF18, IL2RA and CTLA4 and repress the expression of IL2 and IFNG via its association with transcription factor RUNX1. Inhibits the differentiation of IL17 producing helper T-cells (Th17) by antagonizing RORC function, leading to down-regulation of IL17 expression, favoring Treg development. Inhibits the transcriptional activator activity of RORA. Can repress the expression of IL2 and IFNG via its association with transcription factor IKZF4. This Homo sapiens (Human) protein is Forkhead box protein P3 (FOXP3).